Reading from the N-terminus, the 552-residue chain is Phosphoglucomutase (552 aa).

Ser143 serves as the catalytic Phosphoserine intermediate. Residues Ser143, Asp295, Asp297, and Asp299 each coordinate Mg(2+).

This sequence belongs to the phosphohexose mutase family. The cofactor is Mg(2+).

The enzyme catalyses alpha-D-glucose 1-phosphate = alpha-D-glucose 6-phosphate. Its pathway is glycolipid metabolism; diglucosyl-diacylglycerol biosynthesis. Catalyzes the interconversion between glucose-6-phosphate and alpha-glucose-1-phosphate. This is the first step in the biosynthesis of diglucosyl-diacylglycerol (Glc2-DAG), i.e. the predominant glycolipid found in the S.aureus membrane, which is also used as a membrane anchor for lipoteichoic acid (LTA). The chain is Phosphoglucomutase (pgcA) from Staphylococcus aureus (strain Mu50 / ATCC 700699).